The primary structure comprises 264 residues: Octanoyltransferase (264 aa).

The 189-residue stretch at 74 to 262 (GTASELVWLV…AFESVFGPRQ (189 aa)) folds into the BPL/LPL catalytic domain. Residues 113 to 120 (RGGEYTYH), 193 to 195 (AIG), and 206 to 208 (GIA) each bind substrate. Cys-224 (acyl-thioester intermediate) is an active-site residue.

It belongs to the LipB family.

The protein resides in the cytoplasm. It catalyses the reaction octanoyl-[ACP] + L-lysyl-[protein] = N(6)-octanoyl-L-lysyl-[protein] + holo-[ACP] + H(+). It functions in the pathway protein modification; protein lipoylation via endogenous pathway; protein N(6)-(lipoyl)lysine from octanoyl-[acyl-carrier-protein]: step 1/2. Catalyzes the transfer of endogenously produced octanoic acid from octanoyl-acyl-carrier-protein onto the lipoyl domains of lipoate-dependent enzymes. Lipoyl-ACP can also act as a substrate although octanoyl-ACP is likely to be the physiological substrate. The protein is Octanoyltransferase of Brucella melitensis biotype 1 (strain ATCC 23456 / CCUG 17765 / NCTC 10094 / 16M).